Consider the following 203-residue polypeptide: Shikimate kinase (203 aa).

32–37 (GAGKTA) is an ATP binding site. Position 36 (Thr36) interacts with Mg(2+). 3 residues coordinate substrate: Asp54, Arg78, and Gly100. An ATP-binding site is contributed by Arg138. Substrate is bound at residue Arg157.

The protein belongs to the shikimate kinase family. In terms of assembly, monomer. It depends on Mg(2+) as a cofactor.

The protein resides in the cytoplasm. It catalyses the reaction shikimate + ATP = 3-phosphoshikimate + ADP + H(+). Its pathway is metabolic intermediate biosynthesis; chorismate biosynthesis; chorismate from D-erythrose 4-phosphate and phosphoenolpyruvate: step 5/7. Functionally, catalyzes the specific phosphorylation of the 3-hydroxyl group of shikimic acid using ATP as a cosubstrate. This is Shikimate kinase from Mesorhizobium japonicum (strain LMG 29417 / CECT 9101 / MAFF 303099) (Mesorhizobium loti (strain MAFF 303099)).